We begin with the raw amino-acid sequence, 248 residues long: Methionine aminopeptidase 1 (248 aa).

Histidine 77 is a binding site for substrate. Residues aspartate 94, aspartate 105, and histidine 168 each coordinate a divalent metal cation. A substrate-binding site is contributed by histidine 175. Glutamate 201 and glutamate 232 together coordinate a divalent metal cation.

In terms of assembly, monomer. It depends on Co(2+) as a cofactor. Zn(2+) serves as cofactor. The cofactor is Mn(2+). Fe(2+) is required as a cofactor.

The protein resides in the cytoplasm. It carries out the reaction Release of N-terminal amino acids, preferentially methionine, from peptides and arylamides.. Functionally, removes the N-terminal methionine from nascent proteins. The N-terminal methionine is often cleaved when the second residue in the primary sequence is small and uncharged (Met-Ala-, Cys, Gly, Pro, Ser, Thr, or Val). Requires deformylation of the N(alpha)-formylated initiator methionine before it can be hydrolyzed. This chain is Methionine aminopeptidase 1, found in Bacillus subtilis (strain 168).